Here is a 146-residue protein sequence, read N- to C-terminus: Cyanate hydratase (146 aa).

Catalysis depends on residues R87, E90, and S113.

The protein belongs to the cyanase family.

The catalysed reaction is cyanate + hydrogencarbonate + 3 H(+) = NH4(+) + 2 CO2. In terms of biological role, catalyzes the reaction of cyanate with bicarbonate to produce ammonia and carbon dioxide. The polypeptide is Cyanate hydratase (Synechococcus elongatus (strain ATCC 33912 / PCC 7942 / FACHB-805) (Anacystis nidulans R2)).